The following is a 121-amino-acid chain: MDNPMLLKSTTRHVRIFAGEIDRDGDLVPSQQVLTLDIDPDNEFNWNEDALQKVYRKFDELVEASSGADLTDYNLRRVGSDLEHYLRSLLQLGEISYNLSARVTNYSMGVPQVAIDDKQVS.

This sequence belongs to the complex I NdhM subunit family. As to quaternary structure, NDH-1 can be composed of about 15 different subunits; different subcomplexes with different compositions have been identified which probably have different functions.

The protein resides in the cellular thylakoid membrane. The catalysed reaction is a plastoquinone + NADH + (n+1) H(+)(in) = a plastoquinol + NAD(+) + n H(+)(out). It carries out the reaction a plastoquinone + NADPH + (n+1) H(+)(in) = a plastoquinol + NADP(+) + n H(+)(out). In terms of biological role, NDH-1 shuttles electrons from an unknown electron donor, via FMN and iron-sulfur (Fe-S) centers, to quinones in the respiratory and/or the photosynthetic chain. The immediate electron acceptor for the enzyme in this species is believed to be plastoquinone. Couples the redox reaction to proton translocation, and thus conserves the redox energy in a proton gradient. Cyanobacterial NDH-1 also plays a role in inorganic carbon-concentration. The protein is NAD(P)H-quinone oxidoreductase subunit M of Nostoc punctiforme (strain ATCC 29133 / PCC 73102).